The chain runs to 381 residues: Opsin Rh2 (381 aa).

The Extracellular segment spans residues 1-56 (MERSHLPETPFDLAHSGPRFQAQSSGNGSVLDNVLPDMAHLVNPYWSRFAPMDPMM). N27 carries an N-linked (GlcNAc...) asparagine glycan. A helical transmembrane segment spans residues 57 to 81 (SKILGLFTLAIMIISCCGNGVVVYI). The Cytoplasmic portion of the chain corresponds to 82–93 (FGGTKSLRTPAN). Residues 94-119 (LLVLNLAFSDFCMMASQSPVMIINFY) form a helical membrane-spanning segment. The Extracellular portion of the chain corresponds to 120 to 133 (YETWVLGPLWCDIY). Cysteines 130 and 207 form a disulfide. Residues 134 to 153 (AGCGSLFGCVSIWSMCMIAF) form a helical membrane-spanning segment. Topologically, residues 154–172 (DRYNVIVKGINGTPMTIKT) are cytoplasmic. Residues 173–196 (SIMKILFIWMMAVFWTVMPLIGWS) form a helical membrane-spanning segment. Over 197–220 (AYVPEGNLTACSIDYMTRMWNPRS) the chain is Extracellular. A helical membrane pass occupies residues 221–248 (YLITYSLFVYYTPLFLICYSYWFIIAAV). The Cytoplasmic segment spans residues 249-283 (AAHEKAMREQAKKMNVKSLRSSEDCDKSAEGKLAK). A helical transmembrane segment spans residues 284–307 (VALTTISLWFMAWTPYLVICYFGL). Residues 308–314 (FKIDGLT) lie on the Extracellular side of the membrane. A helical transmembrane segment spans residues 315–339 (PLTTIWGATFAKTSAVYNPIVYGIS). K326 carries the N6-(retinylidene)lysine modification. At 340–381 (HPKYRIVLKEKCPMCVFGNTDEPKPDAPASDTETTSEADSKA) the chain is on the cytoplasmic side. The segment at 359-381 (TDEPKPDAPASDTETTSEADSKA) is disordered. The segment covering 370 to 381 (DTETTSEADSKA) has biased composition (polar residues).

This sequence belongs to the G-protein coupled receptor 1 family. Opsin subfamily. In terms of processing, phosphorylated on some or all of the serine and threonine residues present in the C-terminal region. In terms of tissue distribution, predominant opsin expressed in the dorsal ocelli.

It localises to the membrane. In terms of biological role, visual pigments are the light-absorbing molecules that mediate vision. They consist of an apoprotein, opsin, covalently linked to cis-retinal. The protein is Opsin Rh2 (Rh2) of Drosophila melanogaster (Fruit fly).